The primary structure comprises 285 residues: Urease accessory protein UreD 1 (285 aa).

The protein belongs to the UreD family. In terms of assembly, ureD, UreF and UreG form a complex that acts as a GTP-hydrolysis-dependent molecular chaperone, activating the urease apoprotein by helping to assemble the nickel containing metallocenter of UreC. The UreE protein probably delivers the nickel.

The protein resides in the cytoplasm. Its function is as follows. Required for maturation of urease via the functional incorporation of the urease nickel metallocenter. The protein is Urease accessory protein UreD 1 of Pseudomonas syringae pv. tomato (strain ATCC BAA-871 / DC3000).